We begin with the raw amino-acid sequence, 1093 residues long: Error-prone DNA polymerase (1093 aa).

A disordered region spans residues Met1 to Ser55. A compositionally biased stretch (basic and acidic residues) spans Glu12–Gly25.

Belongs to the DNA polymerase type-C family. DnaE2 subfamily.

It is found in the cytoplasm. It catalyses the reaction DNA(n) + a 2'-deoxyribonucleoside 5'-triphosphate = DNA(n+1) + diphosphate. Functionally, DNA polymerase involved in damage-induced mutagenesis and translesion synthesis (TLS). It is not the major replicative DNA polymerase. This Mycolicibacterium paratuberculosis (strain ATCC BAA-968 / K-10) (Mycobacterium paratuberculosis) protein is Error-prone DNA polymerase.